The chain runs to 563 residues: uncharacterized protein (563 aa).

This sequence belongs to the HyuB family.

This is an uncharacterized protein from Methanocaldococcus jannaschii (strain ATCC 43067 / DSM 2661 / JAL-1 / JCM 10045 / NBRC 100440) (Methanococcus jannaschii).